The sequence spans 619 residues: MPAYRSRTTTHGRNMAGARGLWRATGMKDSDFGKPIIAVVNSFTQFVPGHVHLKDLGQLVAREIEAAGGVAKEFNTIAVDDGIAMGHDGMLYSLPSRELIADSVEYMVNAHCADAMVCISNCDKITPGMLMAAMRLNIPAVFVSGGPMEAGKVVLKGKTHAVDLIDAMVAAADSSMSDEDVQTMERSACPTCGSCSGMFTANSMNCLAEALGLALPGNGSVLATHADRKRLFVEAGHTIVDLARRYYEGDDESVLPRKVASFEAFENAMTLDIAMGGSTNTVLHLLAAAREAELDFSMKDIDRLSRKVPCLSKIAPSVSDVHMEDVHRAGGIMAILGELDRAGLIHNSCPTVHSETLGAALARWDIRQSNSEAVRTFYRAAPGGVPTQVAFSQDRRYDELDLDRQKGVIRDAEHAFSKDGGLAVLYGNIALDGCIVKTAGVDASILTFSGPAKVFESQDDAVSAILGNKIVAGDVIVIRYEGPRGGPGMQEMLYPTSYLKSKGLGKACALITDGRFSGGTSGLSIGHVSPEAAEGGLIGLVRNGDRISIDIPNRGITLDVAADELSRRAEEEEAKGDKAWQPKDRKRKVSAALQAYAMLTTSAANGAVRDVNRRLGKGK.

Mg(2+) is bound at residue Asp-81. Cys-122 serves as a coordination point for [2Fe-2S] cluster. 2 residues coordinate Mg(2+): Asp-123 and Lys-124. At Lys-124 the chain carries N6-carboxylysine. Cys-195 contributes to the [2Fe-2S] cluster binding site. Glu-491 provides a ligand contact to Mg(2+). Residue Ser-517 is the Proton acceptor of the active site.

Belongs to the IlvD/Edd family. In terms of assembly, homodimer. Requires [2Fe-2S] cluster as cofactor. The cofactor is Mg(2+).

The catalysed reaction is (2R)-2,3-dihydroxy-3-methylbutanoate = 3-methyl-2-oxobutanoate + H2O. The enzyme catalyses (2R,3R)-2,3-dihydroxy-3-methylpentanoate = (S)-3-methyl-2-oxopentanoate + H2O. It functions in the pathway amino-acid biosynthesis; L-isoleucine biosynthesis; L-isoleucine from 2-oxobutanoate: step 3/4. The protein operates within amino-acid biosynthesis; L-valine biosynthesis; L-valine from pyruvate: step 3/4. Functionally, functions in the biosynthesis of branched-chain amino acids. Catalyzes the dehydration of (2R,3R)-2,3-dihydroxy-3-methylpentanoate (2,3-dihydroxy-3-methylvalerate) into 2-oxo-3-methylpentanoate (2-oxo-3-methylvalerate) and of (2R)-2,3-dihydroxy-3-methylbutanoate (2,3-dihydroxyisovalerate) into 2-oxo-3-methylbutanoate (2-oxoisovalerate), the penultimate precursor to L-isoleucine and L-valine, respectively. This Rhodopseudomonas palustris (strain HaA2) protein is Dihydroxy-acid dehydratase.